The following is a 606-amino-acid chain: Leucine-rich repeat and immunoglobulin-like domain-containing nogo receptor-interacting protein 2 (606 aa).

The N-terminal stretch at 1–27 is a signal peptide; sequence MLHTAIPCWQPFLGLAVVLLLMGSTIG. One can recognise an LRRNT domain in the interval 28–57; that stretch reads CPARCECSAQNKSVSCHRRRLLAIPEGIPI. Residues 28-545 lie on the Extracellular side of the membrane; sequence CPARCECSAQ…LDLKTILVST (518 aa). Asparagine 38 carries an N-linked (GlcNAc...) asparagine glycan. LRR repeat units lie at residues 58–79, 82–103, 106–127, 130–151, 154–175, 178–199, 202–223, 226–247, 250–271, 274–295, 298–319, and 322–343; these read ETKI…EFIS, LLEE…AFNN, NLRS…VFTG, NLTK…MFQD, NLKS…AFSG, SLEQ…ALSH, SLIA…AFKR, HLKN…NSLY, NLTS…AFKH, YLTH…MFSD, RLQE…SFQG, and FLRV…VFSS. N-linked (GlcNAc...) asparagine glycosylation occurs at asparagine 130. Asparagine 188 carries N-linked (GlcNAc...) asparagine glycosylation. Residues asparagine 250, asparagine 260, and asparagine 279 are each glycosylated (N-linked (GlcNAc...) asparagine). Asparagine 327 carries an N-linked (GlcNAc...) asparagine glycan. The LRRCT domain occupies 355-409; it reads NPLACDCRLLWLLQRQPNLQFGGQQPMCAGPDTIRERSFKDFHSTALSFYFTCKK. Cysteine 432 and cysteine 483 are oxidised to a cystine. 3 N-linked (GlcNAc...) asparagine glycosylation sites follow: asparagine 491, asparagine 522, and asparagine 527. Residues 546–566 traverse the membrane as a helical segment; that stretch reads AMGCFTFLGVVLFCFLLLFVW. Residues 567–606 lie on the Cytoplasmic side of the membrane; the sequence is SRGKGKHKNSIDLEYVPRKNNGAVVEGEVAGPRRFNMKMI.

It localises to the membrane. The protein is Leucine-rich repeat and immunoglobulin-like domain-containing nogo receptor-interacting protein 2 (Lingo2) of Mus musculus (Mouse).